A 498-amino-acid chain; its full sequence is Diacylglycerol O-acyltransferase 1A (498 aa).

Residues 1–67 (MAISDEPETV…ANSQPQQKQD (67 aa)) are disordered. 7 consecutive transmembrane segments (helical) span residues 102–122 (HAGL…RLII), 146–166 (WPLF…FIVE), 178–198 (VVVV…VLVI), 203–223 (SAFL…LKLV), 253–273 (YPYN…TLCY), 295–315 (LIIF…PIVQ), and 342–362 (VWLC…AELL). Positions 369 to 375 (FYQDWWN) match the FYXDWWN motif motif. Helical transmembrane passes span 410 to 430 (AVAL…CIAV), 432 to 452 (CHIF…LVFI), and 465 to 485 (VGNM…CVLL). Residue His-424 is part of the active site.

Belongs to the membrane-bound acyltransferase family. Sterol o-acyltransferase subfamily. In terms of tissue distribution, highly expressed in flowers and pods. Expressed at low levels in roots, stems and leaves.

It localises to the endoplasmic reticulum membrane. The enzyme catalyses an acyl-CoA + a 1,2-diacyl-sn-glycerol = a triacyl-sn-glycerol + CoA. Its pathway is glycerolipid metabolism; triacylglycerol biosynthesis. In terms of biological role, major contributor to triacylglycerol (TAG) synthesis and oil accumulation in developing seeds. Catalyzes the acylation of the sn-3 hydroxy group of sn-1,2-diacylglycerol using acyl-CoA. Has a marked preference for oleoyl-CoA (18:1) and sn-1,2-dioleoylglycerol over vernoloyl-CoA and sn-1,2-divernoloylglycerol. Can use oleoyl-CoA, linoleoyl-CoA and linolenoyl-CoA as substrates. The chain is Diacylglycerol O-acyltransferase 1A from Glycine max (Soybean).